The sequence spans 140 residues: Proline-rich nuclear receptor coactivator 2 (140 aa).

Positions 1 to 81 (MGGGERYNIP…NSNWNAGLSS (81 aa)) are disordered. Polar residues-rich tracts occupy residues 11–38 (DPQS…SQTK) and 59–81 (AMQN…GLSS). Residues 100–106 (SEPPSPS) carry the SH3-binding motif.

Belongs to the PNRC family. PNRC2 subfamily. As to quaternary structure, interacts with UPF1/RENT1; preferentially interacts with hyperphosphorylated form. Interacts with DCP1A. Interacts with many nuclear receptors including ESR1, ESRRA, ESRRG, NR3C1/GR, NR5A1, PGR, TR, RAR and RXR. Strong expression is detected in lung, spleen, ovary, thymus, and colon.

It is found in the nucleus. The protein resides in the cytoplasm. Its subcellular location is the P-body. Functionally, involved in nonsense-mediated mRNA decay (NMD) by acting as a bridge between the mRNA decapping complex and the NMD machinery. May act by targeting the NMD machinery to the P-body and recruiting the decapping machinery to aberrant mRNAs. Required for UPF1/RENT1 localization to the P-body. Plays a role in glucocorticoid receptor-mediated mRNA degradation by interacting with the glucocorticoid receptor NR3C1 in a ligand-dependent manner when it is bound to the 5' UTR of target mRNAs and recruiting the RNA helicase UPF1 and the mRNA-decapping enzyme DCP1A, leading to RNA decay. Also acts as a nuclear receptor coactivator. May play a role in controlling the energy balance between energy storage and energy expenditure. The polypeptide is Proline-rich nuclear receptor coactivator 2 (Pnrc2) (Mus musculus (Mouse)).